The chain runs to 253 residues: tRNA (guanine-N(7)-)-methyltransferase (253 aa).

The segment covering 1-12 (MSQTPMPQPDQA) has biased composition (pro residues). Positions 1–39 (MSQTPMPQPDQAPPVDVGQPVDEAEAKRRRFKTHGRKKG) are disordered. Over residues 27–39 (KRRRFKTHGRKKG) the composition is skewed to basic residues. S-adenosyl-L-methionine-binding residues include E84, D109, N136, and D159. D159 is a catalytic residue. Substrate contacts are provided by residues K163, D195, and 232 to 235 (TNFE).

Belongs to the class I-like SAM-binding methyltransferase superfamily. TrmB family.

The enzyme catalyses guanosine(46) in tRNA + S-adenosyl-L-methionine = N(7)-methylguanosine(46) in tRNA + S-adenosyl-L-homocysteine. Its pathway is tRNA modification; N(7)-methylguanine-tRNA biosynthesis. Functionally, catalyzes the formation of N(7)-methylguanine at position 46 (m7G46) in tRNA. The polypeptide is tRNA (guanine-N(7)-)-methyltransferase (Magnetococcus marinus (strain ATCC BAA-1437 / JCM 17883 / MC-1)).